We begin with the raw amino-acid sequence, 919 residues long: 2-oxoadipate dehydrogenase complex component E1 (919 aa).

2 positions are modified to N6-succinyllysine: lysine 183 and lysine 188. The segment at 299–320 (GKTRGRQQSRQDGDYSPDNSAQ) is disordered. Residues lysine 800 and lysine 818 each carry the N6-succinyllysine modification.

This sequence belongs to the alpha-ketoglutarate dehydrogenase family. In terms of assembly, the 2-oxoadipate dehydrogenase complex is composed of OADH (2-oxoadipate dehydrogenase; E1a), DLST (dihydrolipoamide succinyltransferase; E2) and DLD (dihydrolipoamide dehydrogenase; E3). E1a functional unit is a dimer. Interacts with DLST. The cofactor is thiamine diphosphate.

It is found in the mitochondrion. The enzyme catalyses N(6)-[(R)-lipoyl]-L-lysyl-[protein] + 2-oxoadipate + H(+) = N(6)-[(R)-S(8)-glutaryldihydrolipoyl]-L-lysyl-[protein] + CO2. It functions in the pathway amino-acid degradation. 2-oxoadipate dehydrogenase (E1a) component of the 2-oxoadipate dehydrogenase complex (OADHC). Participates in the first step, rate limiting for the overall conversion of 2-oxoadipate (alpha-ketoadipate) to glutaryl-CoA and CO(2) catalyzed by the whole OADHC. Catalyzes the irreversible decarboxylation of 2-oxoadipate via the thiamine diphosphate (ThDP) cofactor and subsequent transfer of the decarboxylated acyl intermediate on an oxidized dihydrolipoyl group that is covalently amidated to the E2 enzyme (dihydrolipoyllysine-residue succinyltransferase or DLST). Can catalyze the decarboxylation of 2-oxoglutarate in vitro, but at a much lower rate than 2-oxoadipate. Responsible for the last step of L-lysine, L-hydroxylysine and L-tryptophan catabolism with the common product being 2-oxoadipate. This Homo sapiens (Human) protein is 2-oxoadipate dehydrogenase complex component E1 (DHTKD1).